Here is a 524-residue protein sequence, read N- to C-terminus: Peptide chain release factor 3 (524 aa).

The tr-type G domain occupies 10 to 278 (DSRRTFAIIS…TFLQFAPAPH (269 aa)). Residues 19-26 (SHPDAGKT), 87-91 (DTPGH), and 141-144 (NKLD) each bind GTP.

This sequence belongs to the TRAFAC class translation factor GTPase superfamily. Classic translation factor GTPase family. PrfC subfamily.

Its subcellular location is the cytoplasm. Its function is as follows. Increases the formation of ribosomal termination complexes and stimulates activities of RF-1 and RF-2. It binds guanine nucleotides and has strong preference for UGA stop codons. It may interact directly with the ribosome. The stimulation of RF-1 and RF-2 is significantly reduced by GTP and GDP, but not by GMP. The sequence is that of Peptide chain release factor 3 from Enterococcus faecalis (strain ATCC 700802 / V583).